Reading from the N-terminus, the 1435-residue chain is Neuropathy target esterase sws (1435 aa).

Topologically, residues 1–35 (MDVLELLRVSGSNMYYSTFLADAWCYYISNQITMT) are lumenal. Residues 36 to 56 (MYLYCALGVLSMLFIGWFVYF) traverse the membrane as a helical segment. The Cytoplasmic segment spans residues 57–1435 (KRLARLRLRH…NTNNETKNYL (1379 aa)). 176-303 (IFGHFEKPIF…IRVIQVIMIR (128 aa)) contacts a nucleoside 3',5'-cyclic phosphate. Over residues 361 to 372 (AASGTAGSTHTA) the composition is skewed to low complexity. Disordered stretches follow at residues 361-405 (AASG…ELSG) and 422-452 (NSYP…QPEV). The span at 435-449 (GNLSTRRGSITQQEQ) shows a compositional bias: polar residues. A Phosphoserine modification is found at S443. A nucleoside 3',5'-cyclic phosphate-binding positions include 474 to 601 (ELGL…VVRR) and 590 to 717 (IVLD…LSHR). Residues 944–1110 (LVLGGGGARG…VNNLPGHLWR (167 aa)) form the PNPLA domain. A GXGXXG motif is present at residues 948 to 953 (GGGARG). Positions 975 to 979 (GVSIG) match the GXSXG motif. The active-site Nucleophile is the S977. Catalysis depends on D1097, which acts as the Proton acceptor. Residues 1097–1099 (DGG) carry the DGA/G motif. Residues 1308–1435 (MDKATQSTPP…NTNNETKNYL (128 aa)) form a disordered region. A compositionally biased stretch (polar residues) spans 1311–1322 (ATQSTPPLQSKA). Basic and acidic residues-rich tracts occupy residues 1330–1361 (SKEE…RELS) and 1393–1424 (MDKK…KENR). The segment covering 1425–1435 (SNTNNETKNYL) has biased composition (polar residues).

Belongs to the NTE family. As to quaternary structure, interacts with Pka-C3; interaction inhibits the catalytic function of Pka-C3 and the esterase activity of sws.

Its subcellular location is the endoplasmic reticulum membrane. The enzyme catalyses a 1-acyl-sn-glycero-3-phosphocholine + H2O = sn-glycerol 3-phosphocholine + a fatty acid + H(+). Functionally, phospholipase B that deacylates intracellular phosphatidylcholine (PtdCho), generating glycerophosphocholine (GroPtdCho). This deacylation occurs at both sn-2 and sn-1 positions of PtdCho. Its specific chemical modification by certain organophosphorus (OP) compounds leads to distal axonopathy. Plays a role in the signaling mechanism between neurons and glia that regulates glia wrapping during development of the adult brain. Essential for membrane lipid homeostasis and cell survival in both neurons and glia of the adult brain. This is Neuropathy target esterase sws from Drosophila persimilis (Fruit fly).